A 152-amino-acid polypeptide reads, in one-letter code: Endoribonuclease YbeY (152 aa).

Zn(2+) contacts are provided by His118, His122, and His128.

The protein belongs to the endoribonuclease YbeY family. Zn(2+) is required as a cofactor.

It localises to the cytoplasm. Functionally, single strand-specific metallo-endoribonuclease involved in late-stage 70S ribosome quality control and in maturation of the 3' terminus of the 16S rRNA. The sequence is that of Endoribonuclease YbeY from Pelotomaculum thermopropionicum (strain DSM 13744 / JCM 10971 / SI).